Here is a 394-residue protein sequence, read N- to C-terminus: Lipase 3 (394 aa).

The first 20 residues, 1–20 (MTRGALKVTILLVGLGLVLA), serve as a signal peptide directing secretion. Asn131 carries an N-linked (GlcNAc...) asparagine glycan. Active-site charge relay system residues include Ser164 and His369.

This sequence belongs to the AB hydrolase superfamily. Lipase family. In terms of tissue distribution, fat body.

The sequence is that of Lipase 3 (Lip3) from Drosophila melanogaster (Fruit fly).